The primary structure comprises 22 residues: Mu-conotoxin GIIIC (22 aa).

Intrachain disulfides connect cysteine 3/cysteine 15, cysteine 4/cysteine 20, and cysteine 10/cysteine 21. Proline 6, proline 7, and proline 17 each carry 4-hydroxyproline. Position 22 is an alanine amide (alanine 22).

Belongs to the conotoxin M superfamily. Expressed by the venom duct.

Its subcellular location is the secreted. Its function is as follows. Mu-conotoxins block voltage-gated sodium channels (Nav). This toxin shows potent activity on Nav1.4/SCN4A (IC(50)=286 nM), and weak activity on mNav1.6/SCN8A. The polypeptide is Mu-conotoxin GIIIC (Conus geographus (Geography cone)).